A 456-amino-acid chain; its full sequence is Histidine--tRNA ligase (456 aa).

Belongs to the class-II aminoacyl-tRNA synthetase family. Homodimer.

It localises to the cytoplasm. The catalysed reaction is tRNA(His) + L-histidine + ATP = L-histidyl-tRNA(His) + AMP + diphosphate + H(+). The chain is Histidine--tRNA ligase from Borreliella afzelii (strain PKo) (Borrelia afzelii).